Here is a 231-residue protein sequence, read N- to C-terminus: MGDHYGFSLTTFSPSGKLMQIEYALNAVKNGQPSVGLRAKDGVVLATENVGSVLTDDQPKVEQISKHIGCVYSGMGPDFRILVKKARKIAMEYEMMYGEEMPTIQLVTDIAAVMQEYTQSGGVRPFGASLLIAGWDKNPGRPLLFQCDPSGAYFAWKATALGKNDVNAKTFLEKRFSEALELDDGIHTALLTLRESFDVGMNENNVEVAVCNSTGFHRLTKQQVHDHLGTL.

Belongs to the peptidase T1A family. In terms of assembly, the 26S proteasome consists of a 20S proteasome core and two 19S regulatory subunits. The 20S proteasome core is composed of 28 subunits that are arranged in four stacked rings, resulting in a barrel-shaped structure. The two end rings are each formed by seven alpha subunits, and the two central rings are each formed by seven beta subunits. The catalytic chamber with the active sites is on the inside of the barrel.

The protein localises to the cytoplasm. It localises to the nucleus. The proteasome is a multicatalytic proteinase complex which is characterized by its ability to cleave peptides with Arg, Phe, Tyr, Leu, and Glu adjacent to the leaving group at neutral or slightly basic pH. The proteasome has an ATP-dependent proteolytic activity. The polypeptide is Proteasome subunit alpha type-2 (pas-2) (Caenorhabditis elegans).